Reading from the N-terminus, the 37-residue chain is Large ribosomal subunit protein bL36 (37 aa).

It belongs to the bacterial ribosomal protein bL36 family.

This Leptospira biflexa serovar Patoc (strain Patoc 1 / Ames) protein is Large ribosomal subunit protein bL36.